The following is a 203-amino-acid chain: Large ribosomal subunit protein uL13 (203 aa).

Position 2 is an N-acetylalanine (Ala-2). A Citrulline modification is found at Arg-59. Phosphoserine; by ZIPK/DAPK3 is present on Ser-77. Arg-140 carries the citrulline modification. At Lys-191 the chain carries N6-acetyllysine.

Belongs to the universal ribosomal protein uL13 family. Component of the 60S ribosome. Component of the GAIT complex. Interacts with EIF4G1. Phosphorylation at Ser-77 upon interferon-gamma treatment in monocytes involves a DAPK1-DAPK3 kinase cascade and is causing release from the ribosome, association with the GAIT complex and subsequent involvement in transcript-selective translation inhibition. In terms of processing, citrullinated by PADI4.

Its subcellular location is the cytoplasm. Associated with ribosomes but is not required for canonical ribosome function and has extra-ribosomal functions. Component of the GAIT (gamma interferon-activated inhibitor of translation) complex which mediates interferon-gamma-induced transcript-selective translation inhibition in inflammation processes. Upon interferon-gamma activation and subsequent phosphorylation dissociates from the ribosome and assembles into the GAIT complex which binds to stem loop-containing GAIT elements in the 3'-UTR of diverse inflammatory mRNAs (such as ceruplasmin) and suppresses their translation. In the GAIT complex interacts with m7G cap-bound eIF4G at or near the eIF3-binding site and blocks the recruitment of the 43S ribosomal complex. Involved in methylation of rRNA. This Homo sapiens (Human) protein is Large ribosomal subunit protein uL13 (RPL13A).